The chain runs to 234 residues: Ribulose-phosphate 3-epimerase (234 aa).

Ser7 serves as a coordination point for substrate. A divalent metal cation is bound by residues His32, Asp34, and His65. Asp34 serves as the catalytic Proton acceptor. Residues His65, 139 to 142 (GFSG), 172 to 174 (DGG), and 194 to 195 (AS) each bind substrate. A divalent metal cation is bound at residue Asp172. Asp172 (proton donor) is an active-site residue.

This sequence belongs to the ribulose-phosphate 3-epimerase family. The cofactor is a divalent metal cation.

It catalyses the reaction D-ribulose 5-phosphate = D-xylulose 5-phosphate. The protein operates within carbohydrate degradation. In terms of biological role, catalyzes the reversible epimerization of D-ribulose 5-phosphate to D-xylulose 5-phosphate. The sequence is that of Ribulose-phosphate 3-epimerase from Methanocaldococcus jannaschii (strain ATCC 43067 / DSM 2661 / JAL-1 / JCM 10045 / NBRC 100440) (Methanococcus jannaschii).